We begin with the raw amino-acid sequence, 173 residues long: Phosphopantetheine adenylyltransferase (173 aa).

Residue serine 9 coordinates substrate. ATP is bound by residues 9–10 (SF) and histidine 17. Positions 41, 73, and 87 each coordinate substrate. Residues 88-90 (GVR), glutamate 98, and 123-129 (YQYLSSS) each bind ATP.

Belongs to the bacterial CoaD family. In terms of assembly, homohexamer. Mg(2+) is required as a cofactor.

The protein resides in the cytoplasm. The enzyme catalyses (R)-4'-phosphopantetheine + ATP + H(+) = 3'-dephospho-CoA + diphosphate. Its pathway is cofactor biosynthesis; coenzyme A biosynthesis; CoA from (R)-pantothenate: step 4/5. Reversibly transfers an adenylyl group from ATP to 4'-phosphopantetheine, yielding dephospho-CoA (dPCoA) and pyrophosphate. This is Phosphopantetheine adenylyltransferase from Limosilactobacillus fermentum (strain NBRC 3956 / LMG 18251) (Lactobacillus fermentum).